Here is a 590-residue protein sequence, read N- to C-terminus: MRRPSLALLALSSLPFGSARQPASFSIHQDLLAHPQFEVIFSDSYVFEADAFALLEAANKTPKPTPASDGAHDGSTTRTDLTSAIRESATANADTDNGDESIGGTSPLRETYELIAHPPMRYLCSIPIIAPPPALNKTATELAKAEEAREVTRAYNKGWELMRGLENQCLHFVSGWWSYQYCYGKSIVQYHAVPNPKGGPPLRDKNSQEYILGTSLPPSSHSQKGKQIEVPNNEQKQLSPPPNTELQAKDNQRYLVQRLDGGTICDLTGRPRTIEIQYHCNPALSGDRIGWIKEVTTCAYLMVIHTPRLCADVAFLPPKETKAHPITCRQIITSDEEALSFNQRRKNTIDSAAAAAAAVTTEDQKQGSESGSPEKLSYQGLTVAGIPIGARRILPSTHVLPLPRHLQQQRQEAQQGNLLEALTKAAFKADVFGDYGDDNNNNNNNHHPKAGKGRKAAGAGKGQSGQKEMKKMRISERDIDKLGLDQQTLDALREEIRAAGLDPDRNLNDEREAGGEIVWEFYADVSGDEDDGAVAEEGKEVFVWYEDEDEGGEPAEAGKDQKESKKGGNGEGSGSGSEEGSKEEYYRDEL.

Residues 1–19 form the signal peptide; sequence MRRPSLALLALSSLPFGSA. The disordered stretch occupies residues 83 to 106; the sequence is SAIRESATANADTDNGDESIGGTS. Residue Asn-136 is glycosylated (N-linked (GlcNAc...) asparagine). The MRH domain occupies 167 to 312; the sequence is NQCLHFVSGW…VIHTPRLCAD (146 aa). Cys-169 and Cys-182 are oxidised to a cystine. Positions 176, 177, and 189 each coordinate a mannooligosaccharide derivative. The segment at 198–248 is disordered; that stretch reads GGPPLRDKNSQEYILGTSLPPSSHSQKGKQIEVPNNEQKQLSPPPNTELQA. Cystine bridges form between Cys-265–Cys-298 and Cys-280–Cys-310. Positions 266, 272, 294, and 300 each coordinate a mannooligosaccharide derivative. 3 disordered regions span residues 357–376, 436–472, and 545–590; these read AAVT…PEKL, GDDN…MKKM, and YEDE…RDEL. Basic residues predominate over residues 446–455; that stretch reads HHPKAGKGRK. Basic and acidic residues-rich tracts occupy residues 556–568 and 579–590; these read EAGK…KKGG and EGSKEEYYRDEL. Residues 587–590 carry the Prevents secretion from ER motif; it reads RDEL.

It belongs to the OS-9 family. Interacts with missfolded ER lumenal proteins.

Its subcellular location is the endoplasmic reticulum membrane. Lectin involved in the quality control of the secretory pathway. As a member of the endoplasmic reticulum-associated degradation lumenal (ERAD-L) surveillance system, targets misfolded endoplasmic reticulum lumenal glycoproteins for degradation. In Neurospora crassa (strain ATCC 24698 / 74-OR23-1A / CBS 708.71 / DSM 1257 / FGSC 987), this protein is Protein OS-9 homolog (yos-9).